The chain runs to 635 residues: PTS system fructose-specific EIIABC component (635 aa).

The 145-residue stretch at 5–149 (ELLTKHTIKL…DAIIDIINQH (145 aa)) folds into the PTS EIIA type-2 domain. His-67 serves as the catalytic Tele-phosphohistidine intermediate; for EIIA activity. His-67 carries the post-translational modification Phosphohistidine; by HPr. Positions 149–168 (HDKDDDEEEEEEEAAPAPAG) are disordered. The segment covering 152 to 162 (DDDEEEEEEEA) has biased composition (acidic residues). The PTS EIIB type-2 domain occupies 172–267 (ILAVTACPTG…PQELIEKAMN (96 aa)). The active-site Phosphocysteine intermediate; for EIIB activity is Cys-178. At Cys-178 the chain carries Phosphocysteine; by EIIA. The tract at residues 273–293 (YQGSGGGSAASNDDEEAKGKS) is disordered. One can recognise a PTS EIIC type-2 domain in the interval 301–635 (FYKHLMSGVS…GIVKKPVTEK (335 aa)). The next 9 membrane-spanning stretches (helical) occupy residues 312–332 (MLPF…WGIH), 350–370 (FIGG…FIAM), 392–412 (NAGF…VILL), 428–448 (PVLI…QFVV), 470–490 (NLVL…GGPL), 511–531 (AAIM…TTIF), 544–564 (ITCY…FAAA), 569–589 (VIPA…FFRV), and 608–628 (MLYL…LGIV).

It is found in the cell membrane. It catalyses the reaction D-fructose(out) + N(pros)-phospho-L-histidyl-[protein] = D-fructose 1-phosphate(in) + L-histidyl-[protein]. Its function is as follows. The phosphoenolpyruvate-dependent sugar phosphotransferase system (sugar PTS), a major carbohydrate active transport system, catalyzes the phosphorylation of incoming sugar substrates concomitantly with their translocation across the cell membrane. This system is involved in fructose transport. This Bacillus subtilis (strain 168) protein is PTS system fructose-specific EIIABC component (fruA).